The primary structure comprises 507 residues: Protein disulfide-isomerase (507 aa).

Positions 1–20 (MASMVSFCFLLLFLAFFASS) are cleaved as a signal peptide. One can recognise a Thioredoxin 1 domain in the interval 21–144 (FNEIYAEESE…IVDYLKKQSG (124 aa)). Active-site nucleophile residues include C62 and C65. A disulfide bond links C62 and C65. 2 N-linked (GlcNAc...) asparagine glycosylation sites follow: N181 and N278. Residues 365–485 (YRKSEPIPEH…FIEFIEKNRE (121 aa)) enclose the Thioredoxin 2 domain. Catalysis depends on nucleophile residues C407 and C410. A disulfide bond links C407 and C410. The disordered stretch occupies residues 484–507 (REKSSKKESIVKDDQTDSETKAEL). Positions 504–507 (KAEL) match the Prevents secretion from ER motif.

Belongs to the protein disulfide isomerase family.

It localises to the endoplasmic reticulum lumen. The enzyme catalyses Catalyzes the rearrangement of -S-S- bonds in proteins.. Its function is as follows. Participates in the folding of proteins containing disulfide bonds, may be involved in glycosylation, prolyl hydroxylation and triglyceride transfer. This Datisca glomerata (Durango root) protein is Protein disulfide-isomerase (PDI).